The chain runs to 339 residues: Ketol-acid reductoisomerase (NADP(+)) (339 aa).

A KARI N-terminal Rossmann domain is found at 1 to 182; that stretch reads MRVYYDRDAD…GGGRSGIIET (182 aa). NADP(+)-binding positions include 24–27, Lys48, Ser51, Thr53, and 83–86; these read YGSQ and DELQ. The active site involves His108. Gly134 contacts NADP(+). The KARI C-terminal knotted domain maps to 183-328; it reads NFREECETDL…AKLRAMMPWI (146 aa). 4 residues coordinate Mg(2+): Asp191, Glu195, Glu227, and Glu231. Residue Ser252 participates in substrate binding.

Belongs to the ketol-acid reductoisomerase family. Requires Mg(2+) as cofactor.

It catalyses the reaction (2R)-2,3-dihydroxy-3-methylbutanoate + NADP(+) = (2S)-2-acetolactate + NADPH + H(+). The enzyme catalyses (2R,3R)-2,3-dihydroxy-3-methylpentanoate + NADP(+) = (S)-2-ethyl-2-hydroxy-3-oxobutanoate + NADPH + H(+). The protein operates within amino-acid biosynthesis; L-isoleucine biosynthesis; L-isoleucine from 2-oxobutanoate: step 2/4. It participates in amino-acid biosynthesis; L-valine biosynthesis; L-valine from pyruvate: step 2/4. Functionally, involved in the biosynthesis of branched-chain amino acids (BCAA). Catalyzes an alkyl-migration followed by a ketol-acid reduction of (S)-2-acetolactate (S2AL) to yield (R)-2,3-dihydroxy-isovalerate. In the isomerase reaction, S2AL is rearranged via a Mg-dependent methyl migration to produce 3-hydroxy-3-methyl-2-ketobutyrate (HMKB). In the reductase reaction, this 2-ketoacid undergoes a metal-dependent reduction by NADPH to yield (R)-2,3-dihydroxy-isovalerate. This Mesorhizobium japonicum (strain LMG 29417 / CECT 9101 / MAFF 303099) (Mesorhizobium loti (strain MAFF 303099)) protein is Ketol-acid reductoisomerase (NADP(+)).